The primary structure comprises 292 residues: MNNHFKCIGIVGHPRHPTALTTHEMLYRWLCTKGYEVIVEQQIAHELQLKNVKTGTLAEIGQLADLAVVVGGDGNMLGATRTLARYDIKVIGINRGNLGFLTDLDPDNAQQQLADVLEGHYISEKRFLLEAQVCQQDCQKRISTAINEVVLHPGKVAHMIEFEVYIDEIFAFSQRSDGLIISTPTGSTAYSLSAGGPILTPSLDAITLVPMFPHTLSARPLVINSSSTIRLRFSHRRNDLEISCDSQIALPIQEGEDVLIRRCDYHLNLIHPKDYSYFNTLSTKLGWSKKLF.

Aspartate 73 acts as the Proton acceptor in catalysis. NAD(+)-binding positions include 73-74 (DG), 147-148 (NE), histidine 158, arginine 175, aspartate 177, 188-193 (TAYSLS), and glutamine 247.

It belongs to the NAD kinase family. It depends on a divalent metal cation as a cofactor.

The protein resides in the cytoplasm. The enzyme catalyses NAD(+) + ATP = ADP + NADP(+) + H(+). In terms of biological role, involved in the regulation of the intracellular balance of NAD and NADP, and is a key enzyme in the biosynthesis of NADP. Catalyzes specifically the phosphorylation on 2'-hydroxyl of the adenosine moiety of NAD to yield NADP. This chain is NAD kinase, found in Escherichia coli O157:H7.